Consider the following 505-residue polypeptide: Protein nucleotidyltransferase YdiU (505 aa).

The ATP site is built by G102, G104, R105, K125, D137, G138, R188, and R195. Residue D264 is the Proton acceptor of the active site. Mg(2+) is bound by residues N265 and D274. D274 is an ATP binding site. The segment at 485–505 (FADYGKPPAPGEEVQQTFCGT) is disordered.

It belongs to the SELO family. It depends on Mg(2+) as a cofactor. Mn(2+) serves as cofactor.

It carries out the reaction L-seryl-[protein] + ATP = 3-O-(5'-adenylyl)-L-seryl-[protein] + diphosphate. The catalysed reaction is L-threonyl-[protein] + ATP = 3-O-(5'-adenylyl)-L-threonyl-[protein] + diphosphate. The enzyme catalyses L-tyrosyl-[protein] + ATP = O-(5'-adenylyl)-L-tyrosyl-[protein] + diphosphate. It catalyses the reaction L-histidyl-[protein] + UTP = N(tele)-(5'-uridylyl)-L-histidyl-[protein] + diphosphate. It carries out the reaction L-seryl-[protein] + UTP = O-(5'-uridylyl)-L-seryl-[protein] + diphosphate. The catalysed reaction is L-tyrosyl-[protein] + UTP = O-(5'-uridylyl)-L-tyrosyl-[protein] + diphosphate. Nucleotidyltransferase involved in the post-translational modification of proteins. It can catalyze the addition of adenosine monophosphate (AMP) or uridine monophosphate (UMP) to a protein, resulting in modifications known as AMPylation and UMPylation. In Nitrobacter hamburgensis (strain DSM 10229 / NCIMB 13809 / X14), this protein is Protein nucleotidyltransferase YdiU.